The primary structure comprises 368 residues: Agmatine deiminase (368 aa).

The Amidino-cysteine intermediate role is filled by Cys357.

It belongs to the agmatine deiminase family. As to quaternary structure, homodimer.

The enzyme catalyses agmatine + H2O = N-carbamoylputrescine + NH4(+). The protein operates within amine and polyamine biosynthesis; putrescine biosynthesis via agmatine pathway; N-carbamoylputrescine from agmatine: step 1/1. Functionally, mediates the hydrolysis of agmatine into N-carbamoylputrescine in the arginine decarboxylase (ADC) pathway of putrescine biosynthesis, a basic polyamine. The polypeptide is Agmatine deiminase (Pseudomonas syringae pv. syringae (strain B728a)).